The chain runs to 497 residues: Glycerol kinase (497 aa).

Position 12 (threonine 12) interacts with ADP. Positions 12, 13, and 14 each coordinate ATP. Threonine 12 provides a ligand contact to sn-glycerol 3-phosphate. Arginine 16 contacts ADP. Positions 82, 83, 134, and 243 each coordinate sn-glycerol 3-phosphate. Arginine 82, glutamate 83, tyrosine 134, aspartate 243, and glutamine 244 together coordinate glycerol. Residues threonine 265 and glycine 308 each coordinate ADP. Positions 265, 308, 312, and 409 each coordinate ATP. Positions 409 and 413 each coordinate ADP.

The protein belongs to the FGGY kinase family.

The enzyme catalyses glycerol + ATP = sn-glycerol 3-phosphate + ADP + H(+). It participates in polyol metabolism; glycerol degradation via glycerol kinase pathway; sn-glycerol 3-phosphate from glycerol: step 1/1. With respect to regulation, inhibited by fructose 1,6-bisphosphate (FBP). Key enzyme in the regulation of glycerol uptake and metabolism. Catalyzes the phosphorylation of glycerol to yield sn-glycerol 3-phosphate. The polypeptide is Glycerol kinase (Nitratidesulfovibrio vulgaris (strain DSM 19637 / Miyazaki F) (Desulfovibrio vulgaris)).